Reading from the N-terminus, the 141-residue chain is Large ribosomal subunit protein uL22 (141 aa).

Belongs to the universal ribosomal protein uL22 family. Part of the 50S ribosomal subunit.

Its function is as follows. This protein binds specifically to 23S rRNA; its binding is stimulated by other ribosomal proteins, e.g. L4, L17, and L20. It is important during the early stages of 50S assembly. It makes multiple contacts with different domains of the 23S rRNA in the assembled 50S subunit and ribosome. Functionally, the globular domain of the protein is located near the polypeptide exit tunnel on the outside of the subunit, while an extended beta-hairpin is found that lines the wall of the exit tunnel in the center of the 70S ribosome. This is Large ribosomal subunit protein uL22 from Frankia alni (strain DSM 45986 / CECT 9034 / ACN14a).